The chain runs to 235 residues: 7-cyano-7-deazaguanine synthase (235 aa).

Residue 8 to 18 (FSGGQDSTTCL) participates in ATP binding. C187, C196, C199, and C202 together coordinate Zn(2+).

This sequence belongs to the QueC family. Zn(2+) is required as a cofactor.

The catalysed reaction is 7-carboxy-7-deazaguanine + NH4(+) + ATP = 7-cyano-7-deazaguanine + ADP + phosphate + H2O + H(+). The protein operates within purine metabolism; 7-cyano-7-deazaguanine biosynthesis. Its function is as follows. Catalyzes the ATP-dependent conversion of 7-carboxy-7-deazaguanine (CDG) to 7-cyano-7-deazaguanine (preQ(0)). This chain is 7-cyano-7-deazaguanine synthase, found in Aeromonas hydrophila subsp. hydrophila (strain ATCC 7966 / DSM 30187 / BCRC 13018 / CCUG 14551 / JCM 1027 / KCTC 2358 / NCIMB 9240 / NCTC 8049).